Here is a 511-residue protein sequence, read N- to C-terminus: DEP domain-containing protein 7 (511 aa).

The 91-residue stretch at 46–136 (LQTQVEVKKR…SSCSLYRFTT (91 aa)) folds into the DEP domain.

This sequence belongs to the DEPDC7 family. Expressed in liver.

The sequence is that of DEP domain-containing protein 7 (DEPDC7) from Homo sapiens (Human).